The primary structure comprises 298 residues: N-acetylmuramic acid 6-phosphate etherase (298 aa).

The SIS domain occupies 55–218 (IHAQVSGGGR…STGLMIKSGK (164 aa)). Glu83 (proton donor) is an active-site residue. Glu114 is a catalytic residue.

This sequence belongs to the GCKR-like family. MurNAc-6-P etherase subfamily. In terms of assembly, homodimer.

It catalyses the reaction N-acetyl-D-muramate 6-phosphate + H2O = N-acetyl-D-glucosamine 6-phosphate + (R)-lactate. The protein operates within amino-sugar metabolism; 1,6-anhydro-N-acetylmuramate degradation. Its pathway is amino-sugar metabolism; N-acetylmuramate degradation. It participates in cell wall biogenesis; peptidoglycan recycling. Its function is as follows. Specifically catalyzes the cleavage of the D-lactyl ether substituent of MurNAc 6-phosphate, producing GlcNAc 6-phosphate and D-lactate. Together with AnmK, is also required for the utilization of anhydro-N-acetylmuramic acid (anhMurNAc) either imported from the medium or derived from its own cell wall murein, and thus plays a role in cell wall recycling. This is N-acetylmuramic acid 6-phosphate etherase from Escherichia coli O157:H7 (strain EC4115 / EHEC).